Reading from the N-terminus, the 183-residue chain is Deoxyuridine 5'-triphosphate nucleotidohydrolase (183 aa).

Substrate-binding positions include 67–69, asparagine 80, 84–86, and lysine 94; these read RSG and TID. Positions 138-183 are disordered; it reads RAEGGFGSTGGHAGLDPASGTSGQVAEGGPTGGNRYASVVSDREGQ. A compositionally biased stretch (gly residues) spans 141 to 150; that stretch reads GGFGSTGGHA.

The protein belongs to the dUTPase family. The cofactor is Mg(2+).

It carries out the reaction dUTP + H2O = dUMP + diphosphate + H(+). It functions in the pathway pyrimidine metabolism; dUMP biosynthesis; dUMP from dCTP (dUTP route): step 2/2. Functionally, this enzyme is involved in nucleotide metabolism: it produces dUMP, the immediate precursor of thymidine nucleotides and it decreases the intracellular concentration of dUTP so that uracil cannot be incorporated into DNA. This is Deoxyuridine 5'-triphosphate nucleotidohydrolase from Streptomyces coelicolor (strain ATCC BAA-471 / A3(2) / M145).